Consider the following 225-residue polypeptide: Interleukin-6 (225 aa).

The N-terminal stretch at 1 to 24 (MPSRLNVFWLCAAALAALLRCAPA) is a signal peptide. Asn98 carries N-linked (GlcNAc...) asparagine glycosylation.

The protein belongs to the IL-6 superfamily. As to quaternary structure, component of a hexamer of two molecules each of IL6, IL6R and IL6ST; first binds to IL6R to associate with the signaling subunit IL6ST. In terms of tissue distribution, expressed in white muscle, skin, spleen, anterior intestine and stomach. Not expressed in brain, gill, head kidney, posterior intestine and adipose tissue.

The protein localises to the secreted. Functionally, cytokine with a wide variety of biological functions in immunity, tissue regeneration, and metabolism. Binds to IL6R, then the complex associates to the signaling subunit IL6ST/gp130 to trigger the intracellular IL6-signaling pathway. The interaction with the membrane-bound IL6R and IL6ST stimulates 'classic signaling', whereas the binding of IL6 and soluble IL6R to IL6ST stimulates 'trans-signaling'. Alternatively, 'cluster signaling' occurs when membrane-bound IL6:IL6R complexes on transmitter cells activate IL6ST receptors on neighboring receiver cells. This chain is Interleukin-6 (il6), found in Sparus aurata (Gilthead sea bream).